Here is a 607-residue protein sequence, read N- to C-terminus: Glutamine--fructose-6-phosphate aminotransferase [isomerizing] (607 aa).

Cys-2 functions as the Nucleophile; for GATase activity in the catalytic mechanism. In terms of domain architecture, Glutamine amidotransferase type-2 spans 2–217; sequence CGIVGIVGHS…DGDWAVVRRD (216 aa). 2 consecutive SIS domains span residues 283 to 422 and 455 to 597; these read LPFD…ARGV and IARE…VDQP. The active-site For Fru-6P isomerization activity is Lys-602.

Homodimer.

The protein localises to the cytoplasm. The enzyme catalyses D-fructose 6-phosphate + L-glutamine = D-glucosamine 6-phosphate + L-glutamate. Catalyzes the first step in hexosamine metabolism, converting fructose-6P into glucosamine-6P using glutamine as a nitrogen source. The sequence is that of Glutamine--fructose-6-phosphate aminotransferase [isomerizing] from Mesorhizobium japonicum (strain LMG 29417 / CECT 9101 / MAFF 303099) (Mesorhizobium loti (strain MAFF 303099)).